The chain runs to 308 residues: Cytochrome b (308 aa).

Transmembrane regions (helical) follow at residues 1–21 (FGSLLGICLMTQIITGLLMAM), 45–66 (WLIRNLHANGASMFFICIYLHI), 81–101 (WNTGVILLLTLMATAFVGYVL), and 146–166 (FFALHFLLPFMIAGLTFIHLT). Heme b is bound by residues His51 and His65. Residues His150 and His164 each coordinate heme b. His169 is a binding site for a ubiquinone. The next 3 membrane-spanning stretches (helical) occupy residues 194–214 (TKDILGFLAMLVPLTALAMFS), 256–276 (LGGVLALAASVLILFLIPFLH), and 288–308 (LSQLLFWILVTNLLILTWVGS).

The protein belongs to the cytochrome b family. The cytochrome bc1 complex contains 11 subunits: 3 respiratory subunits (MT-CYB, CYC1 and UQCRFS1), 2 core proteins (UQCRC1 and UQCRC2) and 6 low-molecular weight proteins (UQCRH/QCR6, UQCRB/QCR7, UQCRQ/QCR8, UQCR10/QCR9, UQCR11/QCR10 and a cleavage product of UQCRFS1). This cytochrome bc1 complex then forms a dimer. The cofactor is heme b.

It localises to the mitochondrion inner membrane. Functionally, component of the ubiquinol-cytochrome c reductase complex (complex III or cytochrome b-c1 complex) that is part of the mitochondrial respiratory chain. The b-c1 complex mediates electron transfer from ubiquinol to cytochrome c. Contributes to the generation of a proton gradient across the mitochondrial membrane that is then used for ATP synthesis. In Asthenes dorbignyi (Creamy-breasted canastero), this protein is Cytochrome b (MT-CYB).